Consider the following 443-residue polypeptide: ATP-dependent protease ATPase subunit HslU (443 aa).

ATP contacts are provided by residues I18 and 60–65; that span reads GVGKTE. A disordered region spans residues 142-162; that stretch reads LGFEASPSEESNATRQKFRKK. Residues D256, E321, and R393 each coordinate ATP.

This sequence belongs to the ClpX chaperone family. HslU subfamily. As to quaternary structure, a double ring-shaped homohexamer of HslV is capped on each side by a ring-shaped HslU homohexamer. The assembly of the HslU/HslV complex is dependent on binding of ATP.

It is found in the cytoplasm. Functionally, ATPase subunit of a proteasome-like degradation complex; this subunit has chaperone activity. The binding of ATP and its subsequent hydrolysis by HslU are essential for unfolding of protein substrates subsequently hydrolyzed by HslV. HslU recognizes the N-terminal part of its protein substrates and unfolds these before they are guided to HslV for hydrolysis. The polypeptide is ATP-dependent protease ATPase subunit HslU (Nitrosomonas europaea (strain ATCC 19718 / CIP 103999 / KCTC 2705 / NBRC 14298)).